The chain runs to 470 residues: Sorting nexin-17 (470 aa).

The PX domain occupies 1-109 (MHFSIPETES…SFLRRAQQET (109 aa)). A 1,2-diacyl-sn-glycero-3-phospho-(1D-myo-inositol-3-phosphate) contacts are provided by arginine 36, serine 38, lysine 62, and arginine 75. In terms of domain architecture, Ras-associating spans 115–206 (EEVSLEVLLS…YKIVLRKSYW (92 aa)). Residues 115 to 432 (EEVSLEVLLS…DASRESMVKL (318 aa)) form an FERM-like region. Residues 270–432 (GYLRFDACVA…DASRESMVKL (163 aa)) are PTB-like F3 module. A phosphoserine mark is found at serine 336, serine 407, serine 409, serine 415, serine 421, serine 437, and serine 440. The segment at 401-426 (GGTLRRSDSQQAVKSPPLLESPDASR) is disordered.

This sequence belongs to the sorting nexin family. In terms of assembly, monomer. Interacts with APP (via cytoplasmic YXNPXY motif). Interacts with KIF1B. Interacts with the C-termini of P-selectin, PTC, LDLR, VLDLR, LRP1 and LRP8. Interacts with KRIT1 (via N-terminus). Interacts with HRAS. Interacts with ITGB1 and ITGB5 (via NPxY motif). Interacts with CCDC22 and CCDC93; the interaction associates SNX17 with the CCC complex. Interacts (via C-terminus) with VPS26C and VPS35L; the interactions are direct and associate SNX17 with the retriever complex. In terms of tissue distribution, detected in brain neurons (at protein level). Broadly expressed, with highest levels in brain and placenta, and lowest levels in colon, intestine and liver.

The protein localises to the cytoplasm. Its subcellular location is the early endosome. It is found in the cytoplasmic vesicle membrane. Critical regulator of endosomal recycling of numerous surface proteins, including integrins, signaling receptor and channels. Binds to NPxY sequences in the cytoplasmic tails of target cargos. Associates with retriever and CCC complexes to prevent lysosomal degradation and promote cell surface recycling of numerous cargos such as integrins ITGB1, ITGB5 and their associated alpha subunits. Also required for maintenance of normal cell surface levels of APP and LRP1. Interacts with membranes containing phosphatidylinositol 3-phosphate (PtdIns(3P)). The sequence is that of Sorting nexin-17 (Snx17) from Mus musculus (Mouse).